A 353-amino-acid chain; its full sequence is Photosystem II protein D1 (353 aa).

At threonine 2 the chain carries N-acetylthreonine. Phosphothreonine is present on threonine 2. 3 helical membrane-spanning segments follow: residues 29–46, 118–133, and 142–156; these read YIGWFGVLMIPTLLTATS, HFLLGVACYMGREWEL, and WIAVAYSAPVAAATA. A chlorophyll a-binding site is contributed by histidine 118. Residue tyrosine 126 coordinates pheophytin a. Residues aspartate 170 and glutamate 189 each coordinate [CaMn4O5] cluster. Residues 197-218 traverse the membrane as a helical segment; that stretch reads FHMLGVAGVFGGSLFSAMHGSL. Residue histidine 198 coordinates chlorophyll a. Residues histidine 215 and 264-265 each bind a quinone; that span reads SF. Histidine 215 contributes to the Fe cation binding site. Histidine 272 lines the Fe cation pocket. Residues 274–288 form a helical membrane-spanning segment; the sequence is FLAAWPVVGIWFTAL. Residues histidine 332, glutamate 333, aspartate 342, and alanine 344 each contribute to the [CaMn4O5] cluster site. The propeptide occupies 345 to 353; the sequence is AIEAPSTNG.

The protein belongs to the reaction center PufL/M/PsbA/D family. In terms of assembly, PSII is composed of 1 copy each of membrane proteins PsbA, PsbB, PsbC, PsbD, PsbE, PsbF, PsbH, PsbI, PsbJ, PsbK, PsbL, PsbM, PsbT, PsbX, PsbY, PsbZ, Psb30/Ycf12, at least 3 peripheral proteins of the oxygen-evolving complex and a large number of cofactors. It forms dimeric complexes. The D1/D2 heterodimer binds P680, chlorophylls that are the primary electron donor of PSII, and subsequent electron acceptors. It shares a non-heme iron and each subunit binds pheophytin, quinone, additional chlorophylls, carotenoids and lipids. D1 provides most of the ligands for the Mn4-Ca-O5 cluster of the oxygen-evolving complex (OEC). There is also a Cl(-1) ion associated with D1 and D2, which is required for oxygen evolution. The PSII complex binds additional chlorophylls, carotenoids and specific lipids. serves as cofactor. Post-translationally, tyr-161 forms a radical intermediate that is referred to as redox-active TyrZ, YZ or Y-Z. C-terminally processed by CTPA; processing is essential to allow assembly of the oxygen-evolving complex and thus photosynthetic growth.

Its subcellular location is the plastid. The protein resides in the chloroplast thylakoid membrane. The enzyme catalyses 2 a plastoquinone + 4 hnu + 2 H2O = 2 a plastoquinol + O2. Photosystem II (PSII) is a light-driven water:plastoquinone oxidoreductase that uses light energy to abstract electrons from H(2)O, generating O(2) and a proton gradient subsequently used for ATP formation. It consists of a core antenna complex that captures photons, and an electron transfer chain that converts photonic excitation into a charge separation. The D1/D2 (PsbA/PsbD) reaction center heterodimer binds P680, the primary electron donor of PSII as well as several subsequent electron acceptors. The chain is Photosystem II protein D1 from Petunia hybrida (Petunia).